Reading from the N-terminus, the 434-residue chain is GTPase Obg (434 aa).

The 159-residue stretch at 1–159 folds into the Obg domain; the sequence is MQFIDRCQIK…KTVRLELKYL (159 aa). Positions 160–329 constitute an OBG-type G domain; it reads ANVGIVGYPN…LVDRVFDLYQ (170 aa). GTP contacts are provided by residues 166–173, 191–195, 212–215, 282–285, and 310–312; these read GYPNAGKS, FTTLV, DIPG, NKMD, and ISA. S173 and T193 together coordinate Mg(2+). In terms of domain architecture, OCT spans 356–434; that stretch reads EKTIDDDPLD…ICDYEYLIDE (79 aa).

It belongs to the TRAFAC class OBG-HflX-like GTPase superfamily. OBG GTPase family. As to quaternary structure, monomer. Mg(2+) serves as cofactor.

It is found in the cytoplasm. Its function is as follows. An essential GTPase which binds GTP, GDP and possibly (p)ppGpp with moderate affinity, with high nucleotide exchange rates and a fairly low GTP hydrolysis rate. Plays a role in control of the cell cycle, stress response, ribosome biogenesis and in those bacteria that undergo differentiation, in morphogenesis control. The polypeptide is GTPase Obg (Mycoplasmoides gallisepticum (strain R(low / passage 15 / clone 2)) (Mycoplasma gallisepticum)).